The sequence spans 803 residues: Translation initiation factor IF-2 (803 aa).

Disordered regions lie at residues 95-125 (PVVE…EKAE) and 138-209 (EVKE…KLEQ). Residues 111–121 (VPLTSDTTNLN) show a composition bias toward polar residues. Over residues 138–155 (EVKEEAKKTPSEKKETPK) the composition is skewed to basic and acidic residues. Over residues 156 to 167 (KGPRKETRRSRK) the composition is skewed to basic residues. Residues 168-188 (PDKEDKWEREELHMTKLVEER) show a composition bias toward basic and acidic residues. A tr-type G domain is found at 302-471 (PRAPVVTIMG…LLQAEVLELK (170 aa)). The interval 311–318 (GHVDHGKT) is G1. 311–318 (GHVDHGKT) is a binding site for GTP. Residues 336–340 (GITQH) are G2. The interval 357–360 (DTPG) is G3. GTP-binding positions include 357–361 (DTPGH) and 411–414 (NKID). The tract at residues 411 to 414 (NKID) is G4. The interval 447–449 (SAK) is G5.

This sequence belongs to the TRAFAC class translation factor GTPase superfamily. Classic translation factor GTPase family. IF-2 subfamily.

Its subcellular location is the cytoplasm. In terms of biological role, one of the essential components for the initiation of protein synthesis. Protects formylmethionyl-tRNA from spontaneous hydrolysis and promotes its binding to the 30S ribosomal subunits. Also involved in the hydrolysis of GTP during the formation of the 70S ribosomal complex. This Coxiella burnetii (strain CbuG_Q212) (Coxiella burnetii (strain Q212)) protein is Translation initiation factor IF-2.